The sequence spans 427 residues: Histidine--tRNA ligase (427 aa).

This sequence belongs to the class-II aminoacyl-tRNA synthetase family. Homodimer.

It localises to the cytoplasm. The enzyme catalyses tRNA(His) + L-histidine + ATP = L-histidyl-tRNA(His) + AMP + diphosphate + H(+). This is Histidine--tRNA ligase from Lacticaseibacillus casei (strain BL23) (Lactobacillus casei).